Here is a 402-residue protein sequence, read N- to C-terminus: UDP-glucose 6-dehydrogenase (402 aa).

NAD(+) is bound by residues 2-19 (KIAV…GVLL), Val11, Asp29, Lys34, Thr83, Thr118, and Glu145. Residues 141–145 (EFLRE), Lys204, Asn208, 249–253 (YNNPS), and Gly257 each bind substrate. Tyr259 is an NAD(+) binding site. The Nucleophile role is filled by Cys260. Residue Lys263 participates in NAD(+) binding. Lys320 contacts substrate. Position 327 (Arg327) interacts with NAD(+).

The protein belongs to the UDP-glucose/GDP-mannose dehydrogenase family.

The catalysed reaction is UDP-alpha-D-glucose + 2 NAD(+) + H2O = UDP-alpha-D-glucuronate + 2 NADH + 3 H(+). The protein operates within nucleotide-sugar biosynthesis; UDP-alpha-D-glucuronate biosynthesis; UDP-alpha-D-glucuronate from UDP-alpha-D-glucose: step 1/1. Its function is as follows. Catalyzes the formation of UDP-glucuronic acid which is required for capsular hyaluronic acid synthesis. This chain is UDP-glucose 6-dehydrogenase (hasB), found in Streptococcus pyogenes serotype M18 (strain MGAS8232).